The primary structure comprises 235 residues: Small ribosomal subunit protein eS4 (235 aa).

The region spanning 37–100 is the S4 RNA-binding domain; sequence LPLGIIIRDI…NEAYRMLQDE (64 aa).

The protein belongs to the eukaryotic ribosomal protein eS4 family.

The polypeptide is Small ribosomal subunit protein eS4 (Methanosarcina acetivorans (strain ATCC 35395 / DSM 2834 / JCM 12185 / C2A)).